Consider the following 270-residue polypeptide: Formamidopyrimidine-DNA glycosylase (270 aa).

Pro2 functions as the Schiff-base intermediate with DNA in the catalytic mechanism. Glu3 (proton donor) is an active-site residue. Lys58 (proton donor; for beta-elimination activity) is an active-site residue. DNA contacts are provided by His92, Arg111, and Arg153. The segment at 238-270 adopts an FPG-type zinc-finger fold; it reads SVYGASVCPVCGGALRQIRLAQRGTWFCPRCQR. Residue Arg260 is the Proton donor; for delta-elimination activity of the active site.

The protein belongs to the FPG family. As to quaternary structure, monomer. Zn(2+) serves as cofactor.

The catalysed reaction is Hydrolysis of DNA containing ring-opened 7-methylguanine residues, releasing 2,6-diamino-4-hydroxy-5-(N-methyl)formamidopyrimidine.. It carries out the reaction 2'-deoxyribonucleotide-(2'-deoxyribose 5'-phosphate)-2'-deoxyribonucleotide-DNA = a 3'-end 2'-deoxyribonucleotide-(2,3-dehydro-2,3-deoxyribose 5'-phosphate)-DNA + a 5'-end 5'-phospho-2'-deoxyribonucleoside-DNA + H(+). Involved in base excision repair of DNA damaged by oxidation or by mutagenic agents. Acts as a DNA glycosylase that recognizes and removes damaged bases. Has a preference for oxidized purines, such as 7,8-dihydro-8-oxoguanine (8-oxoG). Has AP (apurinic/apyrimidinic) lyase activity and introduces nicks in the DNA strand. Cleaves the DNA backbone by beta-delta elimination to generate a single-strand break at the site of the removed base with both 3'- and 5'-phosphates. The chain is Formamidopyrimidine-DNA glycosylase from Halorhodospira halophila (strain DSM 244 / SL1) (Ectothiorhodospira halophila (strain DSM 244 / SL1)).